A 138-amino-acid chain; its full sequence is Protein FAM136A (138 aa).

N-acetylalanine is present on A2. T124 and T126 each carry phosphothreonine.

The protein belongs to the FAM136 family.

This is Protein FAM136A (FAM136A) from Homo sapiens (Human).